Here is a 157-residue protein sequence, read N- to C-terminus: Crossover junction endodeoxyribonuclease RuvC (157 aa).

Active-site residues include Asp7, Glu66, and Asp139. Mg(2+) is bound by residues Asp7, Glu66, and Asp139.

The protein belongs to the RuvC family. As to quaternary structure, homodimer which binds Holliday junction (HJ) DNA. The HJ becomes 2-fold symmetrical on binding to RuvC with unstacked arms; it has a different conformation from HJ DNA in complex with RuvA. In the full resolvosome a probable DNA-RuvA(4)-RuvB(12)-RuvC(2) complex forms which resolves the HJ. Mg(2+) is required as a cofactor.

Its subcellular location is the cytoplasm. The enzyme catalyses Endonucleolytic cleavage at a junction such as a reciprocal single-stranded crossover between two homologous DNA duplexes (Holliday junction).. In terms of biological role, the RuvA-RuvB-RuvC complex processes Holliday junction (HJ) DNA during genetic recombination and DNA repair. Endonuclease that resolves HJ intermediates. Cleaves cruciform DNA by making single-stranded nicks across the HJ at symmetrical positions within the homologous arms, yielding a 5'-phosphate and a 3'-hydroxyl group; requires a central core of homology in the junction. The consensus cleavage sequence is 5'-(A/T)TT(C/G)-3'. Cleavage occurs on the 3'-side of the TT dinucleotide at the point of strand exchange. HJ branch migration catalyzed by RuvA-RuvB allows RuvC to scan DNA until it finds its consensus sequence, where it cleaves and resolves the cruciform DNA. This Helicobacter pylori (strain P12) protein is Crossover junction endodeoxyribonuclease RuvC.